A 214-amino-acid polypeptide reads, in one-letter code: Large ribosomal subunit protein uL3 (214 aa).

Residues 129 to 157 (FGRGPMSHGSKNHRRPGSIGAGTTPGRVF) are disordered.

This sequence belongs to the universal ribosomal protein uL3 family. In terms of assembly, part of the 50S ribosomal subunit. Forms a cluster with proteins L14 and L19.

In terms of biological role, one of the primary rRNA binding proteins, it binds directly near the 3'-end of the 23S rRNA, where it nucleates assembly of the 50S subunit. This Synechococcus sp. (strain JA-2-3B'a(2-13)) (Cyanobacteria bacterium Yellowstone B-Prime) protein is Large ribosomal subunit protein uL3.